The sequence spans 285 residues: Chlorite dismutase (285 aa).

A signal peptide spans 1–38; sequence MKVRCVSLVAAGLLTIAGSAIGQPAPAPMPAMAPAAKP. Glu-105 lines the Ca(2+) pocket. A heme-binding site is contributed by His-205. Arg-218 functions as the Proton acceptor in the catalytic mechanism. Ca(2+) contacts are provided by Asp-227 and Thr-266.

Belongs to the chlorite dismutase family. Homopentamer. Heme b is required as a cofactor.

The protein localises to the periplasm. It catalyses the reaction chloride + O2 = chlorite. Functionally, catalyzes the heme-dependent decomposition of chlorite to O(2) and chloride with high efficiency and specificity. Used to detoxify chlorite, a by-product of the reduction of perchlorate, a primarily anthropogenic pollutant, in perchlorate-respiring bacteria. The chain is Chlorite dismutase (cld) from Ideonella dechloratans.